Consider the following 353-residue polypeptide: Photosystem II D2 protein (353 aa).

An N-acetylthreonine modification is found at Thr2. Thr2 carries the post-translational modification Phosphothreonine. A helical membrane pass occupies residues 41–61 (CAYFAVGGWFTGTTFVTSWYT). His118 contacts chlorophyll a. Residues 125–141 (GFMLRQFELARSVQLRP) traverse the membrane as a helical segment. Gln130 and Asn143 together coordinate pheophytin a. The helical transmembrane segment at 153-166 (VFVSVFLIYPLGQS) threads the bilayer. His198 is a binding site for chlorophyll a. The helical transmembrane segment at 208–228 (AALLCAIHGATVENTLFEDGD) threads the bilayer. A plastoquinone contacts are provided by His215 and Phe262. Fe cation is bound at residue His215. His269 serves as a coordination point for Fe cation. The helical transmembrane segment at 279–295 (GLWMSALGVVGLALNLR) threads the bilayer.

This sequence belongs to the reaction center PufL/M/PsbA/D family. As to quaternary structure, PSII is composed of 1 copy each of membrane proteins PsbA, PsbB, PsbC, PsbD, PsbE, PsbF, PsbH, PsbI, PsbJ, PsbK, PsbL, PsbM, PsbT, PsbX, PsbY, PsbZ, Psb30/Ycf12, at least 3 peripheral proteins of the oxygen-evolving complex and a large number of cofactors. It forms dimeric complexes. Requires The D1/D2 heterodimer binds P680, chlorophylls that are the primary electron donor of PSII, and subsequent electron acceptors. It shares a non-heme iron and each subunit binds pheophytin, quinone, additional chlorophylls, carotenoids and lipids. There is also a Cl(-1) ion associated with D1 and D2, which is required for oxygen evolution. The PSII complex binds additional chlorophylls, carotenoids and specific lipids. as cofactor.

It localises to the plastid. Its subcellular location is the chloroplast thylakoid membrane. It catalyses the reaction 2 a plastoquinone + 4 hnu + 2 H2O = 2 a plastoquinol + O2. Functionally, photosystem II (PSII) is a light-driven water:plastoquinone oxidoreductase that uses light energy to abstract electrons from H(2)O, generating O(2) and a proton gradient subsequently used for ATP formation. It consists of a core antenna complex that captures photons, and an electron transfer chain that converts photonic excitation into a charge separation. The D1/D2 (PsbA/PsbD) reaction center heterodimer binds P680, the primary electron donor of PSII as well as several subsequent electron acceptors. D2 is needed for assembly of a stable PSII complex. In Cucumis sativus (Cucumber), this protein is Photosystem II D2 protein.